The sequence spans 342 residues: Isopentenyl-diphosphate delta-isomerase (342 aa).

A substrate-binding site is contributed by arginine 11–lysine 12. Residues serine 68, serine 69–threonine 71, serine 99, and asparagine 127 each bind FMN. Residue serine 99 to arginine 101 participates in substrate binding. Glutamine 162 is a substrate binding site. Glutamate 163 contributes to the Mg(2+) binding site. FMN-binding positions include lysine 194, threonine 224, glycine 274 to lysine 276, and alanine 295 to glycine 296.

This sequence belongs to the IPP isomerase type 2 family. In terms of assembly, homooctamer. Dimer of tetramers. Requires FMN as cofactor. The cofactor is NADPH. Mg(2+) serves as cofactor.

It is found in the cytoplasm. It carries out the reaction isopentenyl diphosphate = dimethylallyl diphosphate. Functionally, involved in the biosynthesis of isoprenoids. Catalyzes the 1,3-allylic rearrangement of the homoallylic substrate isopentenyl (IPP) to its allylic isomer, dimethylallyl diphosphate (DMAPP). The protein is Isopentenyl-diphosphate delta-isomerase of Rickettsia africae (strain ESF-5).